Reading from the N-terminus, the 317-residue chain is Protoheme IX farnesyltransferase (317 aa).

9 helical membrane passes run 29–49, 53–73, 102–122, 123–143, 151–171, 179–199, 224–241, 245–267, and 283–303; these read LILLFLITTAAAMEVAGQGRV, LLLITLGSGTCAAAAANTINC, VFLAVLLAITAFSLLAAFANL, LSACLAMAGIAVYVGVYTHWL, IVIGGAAGAIPPLVGWAAVTG, VLFGMIFVWTPPHFWPLAMLI, IFLYTLALVPTSLLLVYP, VSWGYGVVAIALGSWFIYRAWQL, and FSILYMMLLCAAMVGDRLLLP.

The protein belongs to the UbiA prenyltransferase family. Protoheme IX farnesyltransferase subfamily.

It localises to the cell inner membrane. It catalyses the reaction heme b + (2E,6E)-farnesyl diphosphate + H2O = Fe(II)-heme o + diphosphate. It participates in porphyrin-containing compound metabolism; heme O biosynthesis; heme O from protoheme: step 1/1. Converts heme B (protoheme IX) to heme O by substitution of the vinyl group on carbon 2 of heme B porphyrin ring with a hydroxyethyl farnesyl side group. This is Protoheme IX farnesyltransferase from Thermosynechococcus vestitus (strain NIES-2133 / IAM M-273 / BP-1).